The chain runs to 554 residues: 3-(3-hydroxy-phenyl)propionate/3-hydroxycinnamic acid hydroxylase (554 aa).

Residues 17-46 and 285-295 contribute to the FAD site; these read QVAI…VVEK and FRIDRVLLAGD.

Belongs to the PheA/TfdB FAD monooxygenase family. FAD is required as a cofactor.

It catalyses the reaction 3-(3-hydroxyphenyl)propanoate + NADH + O2 + H(+) = 3-(2,3-dihydroxyphenyl)propanoate + NAD(+) + H2O. The enzyme catalyses (2E)-3-(3-hydroxyphenyl)prop-2-enoate + NADH + O2 + H(+) = (2E)-3-(2,3-dihydroxyphenyl)prop-2-enoate + NAD(+) + H2O. Its pathway is aromatic compound metabolism; 3-phenylpropanoate degradation. Catalyzes the insertion of one atom of molecular oxygen into position 2 of the phenyl ring of 3-(3-hydroxyphenyl)propionate (3-HPP) and hydroxycinnamic acid (3HCI). The sequence is that of 3-(3-hydroxy-phenyl)propionate/3-hydroxycinnamic acid hydroxylase from Escherichia coli O8 (strain IAI1).